Here is a 440-residue protein sequence, read N- to C-terminus: tRNA modification GTPase MnmE (440 aa).

(6S)-5-formyl-5,6,7,8-tetrahydrofolate-binding residues include Arg34, Glu94, and Arg134. Positions 229-367 (GVRVVLAGPP…LVALLLDRAA (139 aa)) constitute a TrmE-type G domain. Asn239 contacts K(+). GTP-binding positions include 239–244 (NAGKST), 258–264 (TPIAGTT), 283–286 (DTAG), and 348–350 (SAR). Ser243 provides a ligand contact to Mg(2+). 3 residues coordinate K(+): Thr258, Ile260, and Thr263. Residue Thr264 participates in Mg(2+) binding. Lys440 lines the (6S)-5-formyl-5,6,7,8-tetrahydrofolate pocket.

This sequence belongs to the TRAFAC class TrmE-Era-EngA-EngB-Septin-like GTPase superfamily. TrmE GTPase family. Homodimer. Heterotetramer of two MnmE and two MnmG subunits. K(+) serves as cofactor.

The protein resides in the cytoplasm. Functionally, exhibits a very high intrinsic GTPase hydrolysis rate. Involved in the addition of a carboxymethylaminomethyl (cmnm) group at the wobble position (U34) of certain tRNAs, forming tRNA-cmnm(5)s(2)U34. The chain is tRNA modification GTPase MnmE from Rhizorhabdus wittichii (strain DSM 6014 / CCUG 31198 / JCM 15750 / NBRC 105917 / EY 4224 / RW1) (Sphingomonas wittichii).